The sequence spans 293 residues: DOMON domain-containing protein FRRS1L (293 aa).

Residues 1-28 (MAGQPLRRPAWVPLLLRLLLAGIAACDA) form the signal peptide. Positions 29–60 (SPADDSAGPGGRGPRGRARGDAGADEAVPRHD) are disordered. Basic and acidic residues predominate over residues 46–60 (ARGDAGADEAVPRHD). The region spanning 119-234 (CDYFLSYRMI…WYYLFAWGPA (116 aa)) is the DOMON domain. The chain crosses the membrane as a helical span at residues 271–291 (TFSSPFCLLLIVALTFYLLMG).

In terms of assembly, component of the outer core of AMPAR complex. AMPAR complex consists of an inner core made of 4 pore-forming GluA/GRIA proteins (GRIA1, GRIA2, GRIA3 and GRIA4) and 4 major auxiliary subunits arranged in a twofold symmetry. One of the two pairs of distinct binding sites is occupied either by CNIH2, CNIH3 or CACNG2, CACNG3. The other harbors CACNG2, CACNG3, CACNG4, CACNG8 or GSG1L. This inner core of AMPAR complex is complemented by outer core constituents binding directly to the GluA/GRIA proteins at sites distinct from the interaction sites of the inner core constituents. Outer core constituents include at least PRRT1, PRRT2, CKAMP44/SHISA9, FRRS1L and NRN1. The proteins of the inner and outer core serve as a platform for other, more peripherally associated AMPAR constituents. Alone or in combination, these auxiliary subunits control the gating and pharmacology of the AMPAR complex and profoundly impact their biogenesis and protein processing. As to expression, expressed in the brain (at protein level). In embryos expression is evident in the ventral forebrain, but a lower level is seen in the remainder of the embryos. In the adult brain, expressed in the cortex, cerebellum, hippocampus and basal ganglia.

The protein resides in the cell membrane. Its subcellular location is the synapse. Functionally, important modulator of glutamate signaling pathway. The polypeptide is DOMON domain-containing protein FRRS1L (Frrs1l) (Mus musculus (Mouse)).